Consider the following 532-residue polypeptide: 2,3-bisphosphoglycerate-independent phosphoglycerate mutase (532 aa).

Residues Asp-15 and Ser-65 each contribute to the Mn(2+) site. Residue Ser-65 is the Phosphoserine intermediate of the active site. Residues His-126, Arg-156–Asp-157, Arg-188, Arg-194, Arg-258–Arg-261, and Lys-331 each bind substrate. Mn(2+)-binding residues include Asp-398, His-402, Asp-439, His-440, and His-457.

It belongs to the BPG-independent phosphoglycerate mutase family. Monomer. The cofactor is Mn(2+).

The enzyme catalyses (2R)-2-phosphoglycerate = (2R)-3-phosphoglycerate. It functions in the pathway carbohydrate degradation; glycolysis; pyruvate from D-glyceraldehyde 3-phosphate: step 3/5. Its function is as follows. Catalyzes the interconversion of 2-phosphoglycerate and 3-phosphoglycerate. The protein is 2,3-bisphosphoglycerate-independent phosphoglycerate mutase of Nostoc punctiforme (strain ATCC 29133 / PCC 73102).